The following is a 478-amino-acid chain: Subtilisin-like protease 3 (478 aa).

The signal sequence occupies residues 1–17; that stretch reads MKFSTILPILWANCCLC. The Inhibitor I9 domain occupies 70-167; sequence RYVIVFNEDI…FVEQETTVKI (98 aa). A Peptidase S8 domain is found at 177–478; that stretch reads PWGLHRVSHR…GGGKKLDGFW (302 aa). Residues Asp213, His245, and Ser407 each act as charge relay system in the active site.

Belongs to the peptidase S8 family.

Functionally, serine protease with unknown substrate. The chain is Subtilisin-like protease 3 (YSP3) from Saccharomyces cerevisiae (strain ATCC 204508 / S288c) (Baker's yeast).